The following is a 393-amino-acid chain: tRNA-specific 2-thiouridylase MnmA (393 aa).

ATP is bound by residues 19-26 (AMSGGVDS) and leucine 45. The Nucleophile role is filled by cysteine 113. Cysteine 113 and cysteine 210 are joined by a disulfide. Glycine 137 contacts ATP. The interaction with tRNA stretch occupies residues 160–162 (RDQ). Cysteine 210 serves as the catalytic Cysteine persulfide intermediate.

The protein belongs to the MnmA/TRMU family.

The protein resides in the cytoplasm. It carries out the reaction S-sulfanyl-L-cysteinyl-[protein] + uridine(34) in tRNA + AH2 + ATP = 2-thiouridine(34) in tRNA + L-cysteinyl-[protein] + A + AMP + diphosphate + H(+). Catalyzes the 2-thiolation of uridine at the wobble position (U34) of tRNA, leading to the formation of s(2)U34. This chain is tRNA-specific 2-thiouridylase MnmA, found in Afipia carboxidovorans (strain ATCC 49405 / DSM 1227 / KCTC 32145 / OM5) (Oligotropha carboxidovorans).